Reading from the N-terminus, the 243-residue chain is Ribonuclease 3 (243 aa).

In terms of domain architecture, RNase III spans 19–144; sequence FNTLHKLLGF…LVGAIYLDRG (126 aa). Glu-61 is a binding site for Mg(2+). The active site involves Asp-65. Mg(2+)-binding residues include Asn-130 and Glu-133. Glu-133 is an active-site residue. Residues 172-240 enclose the DRBM domain; that stretch reads SYKSLLIEWC…SKRAYYALQN (69 aa).

It belongs to the ribonuclease III family. As to quaternary structure, homodimer. It depends on Mg(2+) as a cofactor.

It localises to the cytoplasm. It catalyses the reaction Endonucleolytic cleavage to 5'-phosphomonoester.. In terms of biological role, digests double-stranded RNA. Involved in the processing of primary rRNA transcript to yield the immediate precursors to the large and small rRNAs (23S and 16S). Processes some mRNAs, and tRNAs when they are encoded in the rRNA operon. Processes pre-crRNA and tracrRNA of type II CRISPR loci if present in the organism. The protein is Ribonuclease 3 (rnc) of Zunongwangia profunda (strain DSM 18752 / CCTCC AB 206139 / SM-A87) (Wangia profunda).